The primary structure comprises 202 residues: Adenylyl-sulfate kinase (202 aa).

31–38 (GLSASGKS) contacts ATP. The Phosphoserine intermediate role is filled by serine 105.

The protein belongs to the APS kinase family.

It carries out the reaction adenosine 5'-phosphosulfate + ATP = 3'-phosphoadenylyl sulfate + ADP + H(+). The protein operates within sulfur metabolism; hydrogen sulfide biosynthesis; sulfite from sulfate: step 2/3. Catalyzes the synthesis of activated sulfate. The chain is Adenylyl-sulfate kinase (MET14) from Saccharomyces pastorianus (Lager yeast).